We begin with the raw amino-acid sequence, 517 residues long: Ribonuclease Y (517 aa).

Residues 3–23 (AILYVIVAVIALILGGAAGVA) form a helical membrane-spanning segment. A KH domain is found at 207–292 (TVTVVSLPND…EMVEKAQKEV (86 aa)). The region spanning 333–426 (VLKHSIEVAH…VAAADAISAA (94 aa)) is the HD domain.

This sequence belongs to the RNase Y family.

It is found in the cell membrane. Its function is as follows. Endoribonuclease that initiates mRNA decay. The protein is Ribonuclease Y of Symbiobacterium thermophilum (strain DSM 24528 / JCM 14929 / IAM 14863 / T).